We begin with the raw amino-acid sequence, 262 residues long: 3-deoxy-manno-octulosonate cytidylyltransferase (262 aa).

Belongs to the KdsB family.

The protein localises to the cytoplasm. The catalysed reaction is 3-deoxy-alpha-D-manno-oct-2-ulosonate + CTP = CMP-3-deoxy-beta-D-manno-octulosonate + diphosphate. It participates in nucleotide-sugar biosynthesis; CMP-3-deoxy-D-manno-octulosonate biosynthesis; CMP-3-deoxy-D-manno-octulosonate from 3-deoxy-D-manno-octulosonate and CTP: step 1/1. It functions in the pathway bacterial outer membrane biogenesis; lipopolysaccharide biosynthesis. In terms of biological role, activates KDO (a required 8-carbon sugar) for incorporation into bacterial lipopolysaccharide in Gram-negative bacteria. In Acidovorax ebreus (strain TPSY) (Diaphorobacter sp. (strain TPSY)), this protein is 3-deoxy-manno-octulosonate cytidylyltransferase.